The sequence spans 178 residues: Large ribosomal subunit protein uL6 (178 aa).

The protein belongs to the universal ribosomal protein uL6 family. Part of the 50S ribosomal subunit.

This protein binds to the 23S rRNA, and is important in its secondary structure. It is located near the subunit interface in the base of the L7/L12 stalk, and near the tRNA binding site of the peptidyltransferase center. The polypeptide is Large ribosomal subunit protein uL6 (Helicobacter pylori (strain HPAG1)).